The sequence spans 426 residues: Glucose-1-phosphate adenylyltransferase (426 aa).

Alpha-D-glucose 1-phosphate is bound by residues Y100, G165, 180 to 181 (EK), and S191.

It belongs to the bacterial/plant glucose-1-phosphate adenylyltransferase family. As to quaternary structure, homotetramer.

The enzyme catalyses alpha-D-glucose 1-phosphate + ATP + H(+) = ADP-alpha-D-glucose + diphosphate. Its pathway is glycan biosynthesis; glycogen biosynthesis. Its function is as follows. Involved in the biosynthesis of ADP-glucose, a building block required for the elongation reactions to produce glycogen. Catalyzes the reaction between ATP and alpha-D-glucose 1-phosphate (G1P) to produce pyrophosphate and ADP-Glc. This Acetivibrio thermocellus (strain ATCC 27405 / DSM 1237 / JCM 9322 / NBRC 103400 / NCIMB 10682 / NRRL B-4536 / VPI 7372) (Clostridium thermocellum) protein is Glucose-1-phosphate adenylyltransferase.